The primary structure comprises 240 residues: Sialidase 85-1.2 (240 aa).

Residues 127–142 (DDDDGGDDDDEEDSQE) are compositionally biased toward acidic residues. 2 disordered regions span residues 127 to 158 (DDDD…GKKP) and 221 to 240 (HRGG…QRDA). Residues 144-155 (SSPKESSPEKIG) are compositionally biased toward basic and acidic residues.

This sequence belongs to the glycosyl hydrolase 33 family.

It catalyses the reaction Hydrolysis of alpha-(2-&gt;3)-, alpha-(2-&gt;6)-, alpha-(2-&gt;8)- glycosidic linkages of terminal sialic acid residues in oligosaccharides, glycoproteins, glycolipids, colominic acid and synthetic substrates.. In terms of biological role, developmentally regulated neuraminidase implicated in parasite invasion of cells. May contribute to the pathology during T.cruzi infection by cleaving sialic acid from cells of the immune system. In Trypanosoma cruzi, this protein is Sialidase 85-1.2 (SA85-1.2).